A 250-amino-acid chain; its full sequence is UPF0259 membrane protein SG1383 (250 aa).

6 helical membrane passes run 20–40 (FASI…LGHA), 86–106 (AGTL…LTMI), 121–141 (IGLS…TTLL), 146–166 (LLLI…APVI), 191–211 (LLAP…LLAT), and 219–239 (LVAV…LLIY).

Belongs to the UPF0259 family.

The protein resides in the cell inner membrane. The chain is UPF0259 membrane protein SG1383 from Sodalis glossinidius (strain morsitans).